A 154-amino-acid polypeptide reads, in one-letter code: Jupiter microtubule associated homolog 1 (154 aa).

Met-1 is modified (N-acetylmethionine). Over residues 1 to 19 the composition is skewed to polar residues; that stretch reads MTTTTTFKGVDPNSRNSSR. Residues 1–154 form a disordered region; that stretch reads MTTTTTFKGV…PGGKSSLVLG (154 aa). An N-acetylthreonine; in Hematological and neurological expressed 1 protein, N-terminally processed modification is found at Thr-2. A phosphoserine mark is found at Ser-28 and Ser-31. Thr-54 carries the phosphothreonine modification. 4 positions are modified to phosphoserine: Ser-71, Ser-87, Ser-88, and Ser-92. Residues 79–91 are compositionally biased toward polar residues; it reads SPGTQRSNSSEAS. Basic and acidic residues predominate over residues 96 to 108; that stretch reads LDLKGEGDMHENV. Over residues 125–138 the composition is skewed to pro residues; sequence PAAPVPSPVAPAPV. Ser-131 is modified (phosphoserine). Lys-148 bears the N6-acetyllysine mark.

Belongs to the JUPITER family. In terms of assembly, interacts with the complex composed, at least, of APC, CTNNB1 and GSK3B; the interaction takes place with the inactive form of GSK3B (phosphorylated at 'Ser-9'). As to expression, expressed in yolk sac, fetal brain, brain, spleen and bone marrow.

It localises to the nucleus. Its subcellular location is the cytoplasm. Modulates negatively AKT-mediated GSK3B signaling. Induces CTNNB1 'Ser-33' phosphorylation and degradation through the suppression of the inhibitory 'Ser-9' phosphorylation of GSK3B, which represses the function of the APC:CTNNB1:GSK3B complex and the interaction with CDH1/E-cadherin in adherent junctions. Plays a role in the regulation of cell cycle and cell adhesion. Has an inhibitory role on AR-signaling pathway through the induction of receptor proteasomal degradation. The sequence is that of Jupiter microtubule associated homolog 1 from Mus musculus (Mouse).